Reading from the N-terminus, the 422-residue chain is 3-carboxy-cis,cis-muconate cycloisomerase (422 aa).

The protein belongs to the class-II fumarase/aspartase family. Homotetramer.

It localises to the cytoplasm. The enzyme catalyses 2-(carboxymethyl)-5-oxo-2,5-dihydro-2-furoate = 3-carboxy-cis,cis-muconate + H(+). It functions in the pathway aromatic compound metabolism; beta-ketoadipate pathway; 5-oxo-4,5-dihydro-2-furylacetate from 3-carboxy-cis,cis-muconate: step 1/2. Its function is as follows. Catalyzes an anti cycloisomerization. The sequence is that of 3-carboxy-cis,cis-muconate cycloisomerase (pcaB) from Pseudomonas putida (Arthrobacter siderocapsulatus).